The sequence spans 131 residues: Hydrophilin PGA14 (131 aa).

Positions 1 to 18 (MKFTTVATVFAISSLAAA) are cleaved as a signal peptide. 2 stretches are compositionally biased toward basic and acidic residues: residues 42-59 (YGRF…ETGT) and 79-96 (KESD…RDSK). The tract at residues 42–110 (YGRFDKTSRS…NSTTSSGNNG (69 aa)) is disordered. 2 N-linked (GlcNAc...) asparagine glycosylation sites follow: asparagine 97 and asparagine 101. Positions 97 to 110 (NASSNSTTSSGNNG) are enriched in low complexity. The GPI-anchor amidated serine moiety is linked to residue serine 105. Positions 106-131 (SGNNGVATGVSLGLAGVLAVGAALVI) are cleaved as a propeptide — removed in mature form.

It belongs to the PGA14 family. Post-translationally, the GPI-anchor is attached to the protein in the endoplasmic reticulum and serves to target the protein to the cell surface. There, the glucosamine-inositol phospholipid moiety is cleaved off and the GPI-modified mannoprotein is covalently attached via its lipidless GPI glycan remnant to the 1,6-beta-glucan of the outer cell wall layer.

It localises to the secreted. The protein localises to the cell wall. Its subcellular location is the membrane. Its function is as follows. Hydrophilin which is essential to overcome the simple stress of the desiccation-rehydration process. The protein is Hydrophilin PGA14 (PGA14) of Candida albicans (strain SC5314 / ATCC MYA-2876) (Yeast).